Here is a 704-residue protein sequence, read N- to C-terminus: MLKLFSAFRKDKIWDFDGGIHPPEMKTQSNGTPLRQVPLAPRFVIPLKQHIGAEGELCVSVGDRVLRGQALTRGRGRMLPVHAPTSGTVIAIAPHSTAHPSALAELSVIIDADGEDRWIEREGWSDYRAHSREALIERIHQYGVAGLGGAGFPTGVKLQGGGDKITTLIINAAECEPYITADDRLMQDCAAQIVEGIRILAHILQPREVLIGIEDNKPQAISMLRAVLADAHDISLRVIPTKYPSGGAKQLTQILTGKQVPHGGRSSDIGVLMQNVGTAYAVKRAVVDGEPITERVVTLTGEAVSRPGNVWARLGTPVRHLLNDAGFCPSADQMVIMGGPLMGFPLPWLDVPVVKITNCLLAPSVTEMGAPQEEKSCIRCSACADACPADLLPQQLYWFSKGQQHDKATAHHIADCIECGACAWVCPSNIPLVQYFRQEKAEINAIRLEEKRAAEAKARFEARQARLEREKAARLARHKSAAVQPAAKDQDAIAAALARVKEKQAQATQPVVIQAGSLPDNSAVIAAREARKAQARAKQAAHPVADSAISGGDPRKAAVEAAIARAKARKQEQQAGSEPAEPVDPRKAAVEAAIARAKARKQEQQAGSEPAEPVDPRKAAVEAAIARAKARKQEQQAGGEPAEPVDPRKAAVEAAIARAKARKQEQQAGSEPAEPADPRKAAVAAAIARVQAKKAAQQQVVNED.

4Fe-4S ferredoxin-type domains lie at 368–397 and 407–436; these read MGAPQEEKSCIRCSACADACPADLLPQQLY and KATAHHIADCIECGACAWVCPSNIPLVQYF. [4Fe-4S] cluster-binding residues include cysteine 377, cysteine 380, cysteine 383, cysteine 387, cysteine 416, cysteine 419, cysteine 422, and cysteine 426. A disordered region spans residues 534–682; it reads QARAKQAAHP…AEPADPRKAA (149 aa).

The protein belongs to the 4Fe4S bacterial-type ferredoxin family. RnfC subfamily. In terms of assembly, the complex is composed of six subunits: RsxA, RsxB, RsxC, RsxD, RsxE and RsxG. It depends on [4Fe-4S] cluster as a cofactor.

It localises to the cell inner membrane. Part of a membrane-bound complex that couples electron transfer with translocation of ions across the membrane. Required to maintain the reduced state of SoxR. This is Ion-translocating oxidoreductase complex subunit C from Salmonella enteritidis PT4 (strain P125109).